The sequence spans 84 residues: Small ribosomal subunit protein bS16 (84 aa).

It belongs to the bacterial ribosomal protein bS16 family.

The chain is Small ribosomal subunit protein bS16 from Koribacter versatilis (strain Ellin345).